The following is a 356-amino-acid chain: Retinoic acid-induced protein 3 (356 aa).

At 1–35 (MTTPTTAPSGCRSDLDSRYHRLCDLAEGWGIALET) the chain is on the extracellular side. A helical transmembrane segment spans residues 36–56 (LAAVGAVATVACMFALVFLIC). The Cytoplasmic segment spans residues 57-68 (KVQDSNKRKMLP). Residues 69 to 89 (AQFLFLLGVLGVFGLTFAFII) traverse the membrane as a helical segment. Over 90–101 (KLDGATGPTRFF) the chain is Extracellular. The helical transmembrane segment at 102 to 122 (LFGVLFAICFSCLLAHAFNLI) threads the bilayer. The Cytoplasmic portion of the chain corresponds to 123-131 (KLVRGRKPL). A helical membrane pass occupies residues 132-152 (SWLVILSLAVGFSLVQDVIAI). The Extracellular segment spans residues 153–178 (EYLVLTMNRTNVNVFSELPAPRRNED). The N-linked (GlcNAc...) asparagine glycan is linked to asparagine 160. Residues 179 to 199 (FVMLLIYVLVLMVLTFFTSFL) form a helical membrane-spanning segment. The Cytoplasmic segment spans residues 200 to 214 (VFCGSFSGWKRHGFH). Residues 215–235 (ICFTSFLSIAIWVAWIVLLLI) traverse the membrane as a helical segment. At 236–244 (PDIDRKWDD) the chain is on the extracellular side. Residues 245-265 (TILSTALVANGWVFLAFYILP) traverse the membrane as a helical segment. Topologically, residues 266 to 356 (EFRQLPRQRS…NDYEGRKGDS (91 aa)) are cytoplasmic. Serine 303 is modified (phosphoserine). Phosphotyrosine occurs at positions 318 and 321. Residues 336–356 (IPRAQAPASPYNDYEGRKGDS) are disordered. The residue at position 344 (serine 344) is a Phosphoserine. A phosphotyrosine mark is found at tyrosine 346 and tyrosine 349.

The protein belongs to the G-protein coupled receptor 3 family. Interacts (via its transmembrane domain) with EGFR. In terms of processing, phosphorylated in two conserved double-tyrosine motifs, Tyr 318/Tyr-321 and Tyr-346/Tyr-349 by EGFR. Tyr-318 and Tyr-321 are the preferred residues responsible for EGFR-mediated GPRC5A phosphorylation. Expressed predominantly in normal fetal and adult lung. Almost undetectable or expressed at very low levels in other tissues.

The protein resides in the cell membrane. In terms of biological role, orphan receptor. Could be involved in modulating differentiation and maintaining homeostasis of epithelial cells. This retinoic acid-inducible GPCR provides evidence for a possible interaction between retinoid and G-protein signaling pathways. Functions as a negative modulator of EGFR signaling. Acts as a lung tumor suppressor. The sequence is that of Retinoic acid-induced protein 3 (Gprc5a) from Mus musculus (Mouse).